The chain runs to 1335 residues: Protein SPATA31F1 (1335 aa).

The chain crosses the membrane as a helical span at residues leucine 8–isoleucine 28. 5 disordered regions span residues alanine 403 to aspartate 424, leucine 480 to serine 502, valine 972 to methionine 1002, proline 1019 to serine 1141, and glutamate 1248 to threonine 1335. Over residues serine 414–aspartate 424 the composition is skewed to polar residues. A compositionally biased stretch (polar residues) spans valine 972–glycine 1000. Composition is skewed to basic and acidic residues over residues asparagine 1047 to aspartate 1064, serine 1071 to arginine 1083, and proline 1129 to glutamine 1139.

Belongs to the SPATA31 family.

It localises to the membrane. The chain is Protein SPATA31F1 from Homo sapiens (Human).